A 231-amino-acid chain; its full sequence is Ribosomal RNA small subunit methyltransferase G (231 aa).

Residues Gly-85, Phe-90, and Arg-154 each contribute to the S-adenosyl-L-methionine site.

It belongs to the methyltransferase superfamily. RNA methyltransferase RsmG family.

It localises to the cytoplasm. It carries out the reaction guanosine(527) in 16S rRNA + S-adenosyl-L-methionine = N(7)-methylguanosine(527) in 16S rRNA + S-adenosyl-L-homocysteine. Specifically methylates the N7 position of guanine in position 527 of 16S rRNA. The sequence is that of Ribosomal RNA small subunit methyltransferase G from Rhodopseudomonas palustris (strain BisA53).